A 157-amino-acid chain; its full sequence is 2-C-methyl-D-erythritol 2,4-cyclodiphosphate synthase (157 aa).

Positions 8 and 10 each coordinate a divalent metal cation. Residues 8 to 10 (DVH) and 34 to 35 (HS) contribute to the 4-CDP-2-C-methyl-D-erythritol 2-phosphate site. An a divalent metal cation-binding site is contributed by His-42. 4-CDP-2-C-methyl-D-erythritol 2-phosphate contacts are provided by residues 56-58 (DIG), 61-65 (FPDNE), 132-135 (TTTE), Phe-139, and Arg-142.

The protein belongs to the IspF family. In terms of assembly, homotrimer. The cofactor is a divalent metal cation.

It catalyses the reaction 4-CDP-2-C-methyl-D-erythritol 2-phosphate = 2-C-methyl-D-erythritol 2,4-cyclic diphosphate + CMP. It functions in the pathway isoprenoid biosynthesis; isopentenyl diphosphate biosynthesis via DXP pathway; isopentenyl diphosphate from 1-deoxy-D-xylulose 5-phosphate: step 4/6. Involved in the biosynthesis of isopentenyl diphosphate (IPP) and dimethylallyl diphosphate (DMAPP), two major building blocks of isoprenoid compounds. Catalyzes the conversion of 4-diphosphocytidyl-2-C-methyl-D-erythritol 2-phosphate (CDP-ME2P) to 2-C-methyl-D-erythritol 2,4-cyclodiphosphate (ME-CPP) with a corresponding release of cytidine 5-monophosphate (CMP). The polypeptide is 2-C-methyl-D-erythritol 2,4-cyclodiphosphate synthase (Desulforamulus reducens (strain ATCC BAA-1160 / DSM 100696 / MI-1) (Desulfotomaculum reducens)).